The chain runs to 150 residues: Group IIC secretory phospholipase A2 (150 aa).

Residues 1 to 20 (MKGIAVFLVFIFCWTTSTLS) form the signal peptide. Disulfide bonds link Cys46–Cys143, Cys48–Cys64, Cys63–Cys121, Cys69–Cys150, Cys70–Cys114, Cys79–Cys107, Cys97–Cys112, and Cys99–Cys105. Ca(2+)-binding residues include Tyr47, Gly49, and Gly51. The active site involves His67. Asp68 contacts Ca(2+). Asn92 carries an N-linked (GlcNAc...) asparagine glycan. Asp115 is an active-site residue.

Belongs to the phospholipase A2 family. It depends on Ca(2+) as a cofactor.

It is found in the secreted. The catalysed reaction is a 1,2-diacyl-sn-glycero-3-phosphocholine + H2O = a 1-acyl-sn-glycero-3-phosphocholine + a fatty acid + H(+). Its function is as follows. PA2 catalyzes the calcium-dependent hydrolysis of the 2-acyl groups in 3-sn-phosphoglycerides. The chain is Group IIC secretory phospholipase A2 (Pla2g2c) from Rattus norvegicus (Rat).